A 238-amino-acid chain; its full sequence is Metal-independent phosphoserine phosphatase (238 aa).

The active-site Tele-phosphohistidine intermediate is the H32. The active-site Proton donor/acceptor is E107.

Belongs to the phosphoglycerate mutase family.

The enzyme catalyses O-phospho-L-serine + H2O = L-serine + phosphate. It catalyses the reaction O-phospho-D-serine + H2O = D-serine + phosphate. Its function is as follows. Phosphoglycerate mutase-like protein lacking PGM activity, but having a low metal-independent phosphoserine phosphatase activity in vitro. May be involved in serine biosynthesis. This chain is Metal-independent phosphoserine phosphatase (IPSP), found in Arabidopsis thaliana (Mouse-ear cress).